The following is a 257-amino-acid chain: UPF0246 protein YaaA (257 aa).

It belongs to the UPF0246 family.

This is UPF0246 protein YaaA from Salmonella schwarzengrund (strain CVM19633).